The following is an 88-amino-acid chain: LYR motif-containing protein 2 (88 aa).

A mitochondrion-targeting transit peptide spans 1–19 (MAASRLPPATLTLKQFVRR).

This sequence belongs to the complex I LYR family.

The protein resides in the mitochondrion. Functionally, involved in efficient integration of the N-module into mitochondrial respiratory chain complex I. The polypeptide is LYR motif-containing protein 2 (LYRM2) (Homo sapiens (Human)).